Here is a 370-residue protein sequence, read N- to C-terminus: Sodium-dependent organic anion transporter (370 aa).

Positions 1 to 24 (MSADCEGNSTCPANSTEEDPPVGM) are disordered. The Extracellular segment spans residues 1–32 (MSADCEGNSTCPANSTEEDPPVGMEGQGSLKL). Residues Asn8 and Asn14 are each glycosylated (N-linked (GlcNAc...) asparagine). A helical transmembrane segment spans residues 33–53 (VFTVLSAVMVGLVMFSFGCSV). Topologically, residues 54 to 67 (ESRKLWLHLRRPWG) are cytoplasmic. A helical membrane pass occupies residues 68-88 (IAVGLLCQFGLMPLTAYLLAI). The Extracellular portion of the chain corresponds to 89–97 (GFGLKPFQA). Residues 98–118 (IAVLIMGSCPGGTVSNVLTFW) form a helical membrane-spanning segment. At 119 to 126 (VDGDMDLS) the chain is on the cytoplasmic side. A helical transmembrane segment spans residues 127–147 (ISMTTCSTVAALGMMPLCLYV). At 148–159 (YTRSWTLPQSLT) the chain is on the extracellular side. A helical membrane pass occupies residues 160 to 180 (IPYQSIGITLVSLVVPVASGI). Residues 181–195 (YVNYRWPKQATFILK) lie on the Cytoplasmic side of the membrane. Residues 196–216 (VGAAVGGMLLLVVAVTGVVLA) traverse the membrane as a helical segment. Topologically, residues 217 to 224 (KGWNIDVT) are extracellular. A helical membrane pass occupies residues 225-245 (LLVISCIFPLVGHVMGFLLAF). Topologically, residues 246–265 (LTHQSWQRCRTISIETGAQN) are cytoplasmic. A helical membrane pass occupies residues 266-283 (IQLCIAMMQLSFSAEYLV). Position 284 (Gln284) is a topological domain, extracellular. A helical membrane pass occupies residues 285–305 (LLNFALAYGLFQVLHGLLIVA). The Cytoplasmic segment spans residues 306-370 (AYQAYKRRQK…ELTSHVPSCE (65 aa)).

The protein belongs to the bile acid:sodium symporter (BASS) (TC 2.A.28) family. Glycosylated. In terms of tissue distribution, highly expressed in heart, lung, spleen and adrenal gland. Moderately expressed in skeletal muscle, testis and small intestine.

The protein localises to the membrane. It carries out the reaction estrone 3-sulfate(out) + 2 Na(+)(out) = estrone 3-sulfate(in) + 2 Na(+)(in). It catalyses the reaction 17beta-estradiol 3-sulfate(out) + 2 Na(+)(out) = 17beta-estradiol 3-sulfate(in) + 2 Na(+)(in). The catalysed reaction is dehydroepiandrosterone 3-sulfate(out) + 2 Na(+)(out) = dehydroepiandrosterone 3-sulfate(in) + 2 Na(+)(in). The enzyme catalyses androst-5-ene-diol 3-sulfate(out) + 2 Na(+)(out) = androst-5-ene-diol 3-sulfate(in) + 2 Na(+)(in). It carries out the reaction pregnenolone sulfate(out) + 2 Na(+)(out) = pregnenolone sulfate(in) + 2 Na(+)(in). It catalyses the reaction taurolithocholate 3-sulfate(out) + 2 Na(+)(out) = taurolithocholate 3-sulfate(in) + 2 Na(+)(in). The catalysed reaction is androsterone 3alpha-sulfate(out) + 2 Na(+)(out) = androsterone 3alpha-sulfate(in) + 2 Na(+)(in). The enzyme catalyses 5alpha-dihydrotestosterone sulfate(out) + 2 Na(+)(out) = 5alpha-dihydrotestosterone sulfate(in) + 2 Na(+)(in). It carries out the reaction 17beta-estradiol 17-sulfate(out) + 2 Na(+)(out) = 17beta-estradiol 17-sulfate(in) + 2 Na(+)(in). It catalyses the reaction 17alpha-hydroxypregnenolone 3-sulfate(out) + 2 Na(+)(out) = 17alpha-hydroxypregnenolone 3-sulfate(in) + 2 Na(+)(in). The catalysed reaction is epiandrosterone 3-sulfate(out) + 2 Na(+)(out) = epiandrosterone 3-sulfate(in) + 2 Na(+)(in). The enzyme catalyses epitestosterone 17-sulfate(out) + 2 Na(+)(out) = epitestosterone 17-sulfate(in) + 2 Na(+)(in). It carries out the reaction testosterone 17-sulfate(out) + 2 Na(+)(out) = testosterone 17-sulfate(in) + 2 Na(+)(in). It catalyses the reaction 16alpha-hydroxydehydroepiandrosterone 3-sulfate(out) + 2 Na(+)(out) = 16alpha-hydroxydehydroepiandrosterone 3-sulfate(in) + 2 Na(+)(in). In terms of biological role, transports sulfoconjugated steroid hormones from the extracellular compartment into the cytosol in a sodium-dependent manner without hydrolysis. Steroid sulfate hormones are commonly considered to be biologically inactive metabolites, that may be activated by steroid sulfatases into free steroids. May play an important role by delivering sulfoconjugated steroids to specific target cells in reproductive organs. May play a role transporting the estriol precursor 16alpha-hydroxydehydroepiandrosterone 3-sulfate (16a-OH-DHEAS) at the fetal blood vessel endothelium. Can also transport other sulfoconjugated molecules such as taurolithocholic acid-3-sulfate and sulfoconjugated pyrenes. This Rattus norvegicus (Rat) protein is Sodium-dependent organic anion transporter (Slc10a6).